The primary structure comprises 258 residues: 6-carboxyhexanoate--CoA ligase (258 aa).

This sequence belongs to the BioW family. Homodimer. Mg(2+) is required as a cofactor.

It catalyses the reaction heptanedioate + ATP + CoA = 6-carboxyhexanoyl-CoA + AMP + diphosphate. Its pathway is metabolic intermediate metabolism; pimeloyl-CoA biosynthesis; pimeloyl-CoA from pimelate: step 1/1. Its function is as follows. Catalyzes the transformation of pimelate into pimeloyl-CoA with concomitant hydrolysis of ATP to AMP. The chain is 6-carboxyhexanoate--CoA ligase from Bacillus subtilis (strain BSn5).